The following is a 179-amino-acid chain: Large ribosomal subunit protein bL19 (179 aa).

It belongs to the bacterial ribosomal protein bL19 family.

Functionally, this protein is located at the 30S-50S ribosomal subunit interface and may play a role in the structure and function of the aminoacyl-tRNA binding site. The chain is Large ribosomal subunit protein bL19 from Rhizobium johnstonii (strain DSM 114642 / LMG 32736 / 3841) (Rhizobium leguminosarum bv. viciae).